Consider the following 240-residue polypeptide: Probable hydroxyacylglutathione hydrolase (240 aa).

Positions 33, 35, 37, 38, 95, and 119 each coordinate Zn(2+). Substrate-binding positions include arginine 128, 158 to 160 (HEY), and 234 to 237 (REEK). Position 158 (histidine 158) interacts with Zn(2+).

Belongs to the metallo-beta-lactamase superfamily. Glyoxalase II family. The cofactor is Zn(2+).

The catalysed reaction is an S-(2-hydroxyacyl)glutathione + H2O = a 2-hydroxy carboxylate + glutathione + H(+). The protein operates within secondary metabolite metabolism; methylglyoxal degradation; (R)-lactate from methylglyoxal: step 2/2. In terms of biological role, thiolesterase that catalyzes the hydrolysis of S-D-lactoyl-glutathione to form glutathione and D-lactic acid. This is Probable hydroxyacylglutathione hydrolase from Schistosoma mansoni (Blood fluke).